Consider the following 35-residue polypeptide: Mu-theraphotoxin-Pm1a (35 aa).

Intrachain disulfides connect cysteine 3–cysteine 17, cysteine 10–cysteine 22, and cysteine 16–cysteine 29. The residue at position 35 (phenylalanine 35) is a Phenylalanine amide.

It belongs to the neurotoxin 10 (Hwtx-1) family. 62 (Vatx) subfamily. Expressed by the venom gland.

The protein resides in the secreted. Its function is as follows. Gating-modifier toxin with weak activity on Nav1.7/SCN9A and Nav1.8/SCN10A. Inhibits Nav1.7/SCN9A peak current (IC(50)=334 nM) and shifts the voltage dependence of activation to more depolarised membrane potentials. Shows 21% peak current inhibition (at 10 uM) on Nav1.8/SCN10A sodium channels. The sequence is that of Mu-theraphotoxin-Pm1a from Poecilotheria metallica (Metallic blue ornamental tree spider).